The chain runs to 276 residues: NAD kinase (276 aa).

Asp-61 (proton acceptor) is an active-site residue. NAD(+) contacts are provided by residues 61-62 (DG), 134-135 (ND), Arg-145, Lys-162, Asp-164, Val-172, 175-180 (TAYSFS), and Gln-234.

It belongs to the NAD kinase family. Requires a divalent metal cation as cofactor.

The protein resides in the cytoplasm. The enzyme catalyses NAD(+) + ATP = ADP + NADP(+) + H(+). In terms of biological role, involved in the regulation of the intracellular balance of NAD and NADP, and is a key enzyme in the biosynthesis of NADP. Catalyzes specifically the phosphorylation on 2'-hydroxyl of the adenosine moiety of NAD to yield NADP. This chain is NAD kinase, found in Clostridium perfringens (strain ATCC 13124 / DSM 756 / JCM 1290 / NCIMB 6125 / NCTC 8237 / Type A).